Reading from the N-terminus, the 259-residue chain is GTP cyclohydrolase FolE2 (259 aa).

It belongs to the GTP cyclohydrolase IV family.

It carries out the reaction GTP + H2O = 7,8-dihydroneopterin 3'-triphosphate + formate + H(+). Its pathway is cofactor biosynthesis; 7,8-dihydroneopterin triphosphate biosynthesis; 7,8-dihydroneopterin triphosphate from GTP: step 1/1. Functionally, converts GTP to 7,8-dihydroneopterin triphosphate. This chain is GTP cyclohydrolase FolE2, found in Thermosipho africanus (strain TCF52B).